We begin with the raw amino-acid sequence, 100 residues long: Urease subunit gamma (100 aa).

This sequence belongs to the urease gamma subunit family. Heterotrimer of UreA (gamma), UreB (beta) and UreC (alpha) subunits. Three heterotrimers associate to form the active enzyme.

Its subcellular location is the cytoplasm. It carries out the reaction urea + 2 H2O + H(+) = hydrogencarbonate + 2 NH4(+). The protein operates within nitrogen metabolism; urea degradation; CO(2) and NH(3) from urea (urease route): step 1/1. In Paraburkholderia xenovorans (strain LB400), this protein is Urease subunit gamma.